A 536-amino-acid polypeptide reads, in one-letter code: Bifunctional purine biosynthesis protein PurH (536 aa).

The MGS-like domain maps to 8-158; that stretch reads IPAPDEVRIK…KNHAYVTIVT (151 aa).

This sequence belongs to the PurH family.

The catalysed reaction is (6R)-10-formyltetrahydrofolate + 5-amino-1-(5-phospho-beta-D-ribosyl)imidazole-4-carboxamide = 5-formamido-1-(5-phospho-D-ribosyl)imidazole-4-carboxamide + (6S)-5,6,7,8-tetrahydrofolate. It catalyses the reaction IMP + H2O = 5-formamido-1-(5-phospho-D-ribosyl)imidazole-4-carboxamide. It functions in the pathway purine metabolism; IMP biosynthesis via de novo pathway; 5-formamido-1-(5-phospho-D-ribosyl)imidazole-4-carboxamide from 5-amino-1-(5-phospho-D-ribosyl)imidazole-4-carboxamide (10-formyl THF route): step 1/1. The protein operates within purine metabolism; IMP biosynthesis via de novo pathway; IMP from 5-formamido-1-(5-phospho-D-ribosyl)imidazole-4-carboxamide: step 1/1. This is Bifunctional purine biosynthesis protein PurH from Rhizobium meliloti (strain 1021) (Ensifer meliloti).